Consider the following 366-residue polypeptide: Peptide chain release factor 2 (366 aa).

An N5-methylglutamine modification is found at Q251.

It belongs to the prokaryotic/mitochondrial release factor family. Post-translationally, methylated by PrmC. Methylation increases the termination efficiency of RF2.

The protein localises to the cytoplasm. Peptide chain release factor 2 directs the termination of translation in response to the peptide chain termination codons UGA and UAA. The chain is Peptide chain release factor 2 (prfB) from Bacillus subtilis (strain 168).